The chain runs to 201 residues: Holliday junction branch migration complex subunit RuvA (201 aa).

Residues 1–63 are domain I; the sequence is MIEYIKGEIA…EDAYVLYGFA (63 aa). A domain II region spans residues 64 to 142; sequence DKQERELFLL…TGAMAATAVG (79 aa). The segment at 143-153 is flexible linker; it reads GAAGALLPAMN. The segment at 153 to 201 is domain III; that stretch reads NAEVQEEAIAALTMLGFAAAPSQKAVLAILKEEPDAPVEKVIKLALKRL.

Belongs to the RuvA family. In terms of assembly, homotetramer. Forms an RuvA(8)-RuvB(12)-Holliday junction (HJ) complex. HJ DNA is sandwiched between 2 RuvA tetramers; dsDNA enters through RuvA and exits via RuvB. An RuvB hexamer assembles on each DNA strand where it exits the tetramer. Each RuvB hexamer is contacted by two RuvA subunits (via domain III) on 2 adjacent RuvB subunits; this complex drives branch migration. In the full resolvosome a probable DNA-RuvA(4)-RuvB(12)-RuvC(2) complex forms which resolves the HJ.

The protein resides in the cytoplasm. The RuvA-RuvB-RuvC complex processes Holliday junction (HJ) DNA during genetic recombination and DNA repair, while the RuvA-RuvB complex plays an important role in the rescue of blocked DNA replication forks via replication fork reversal (RFR). RuvA specifically binds to HJ cruciform DNA, conferring on it an open structure. The RuvB hexamer acts as an ATP-dependent pump, pulling dsDNA into and through the RuvAB complex. HJ branch migration allows RuvC to scan DNA until it finds its consensus sequence, where it cleaves and resolves the cruciform DNA. This Bacteroides fragilis (strain ATCC 25285 / DSM 2151 / CCUG 4856 / JCM 11019 / LMG 10263 / NCTC 9343 / Onslow / VPI 2553 / EN-2) protein is Holliday junction branch migration complex subunit RuvA.